The chain runs to 58 residues: Large ribosomal subunit protein bL32 (58 aa).

Residues 1–24 (MAVPKKKTSKSKRDKRKATWKRKA) form a disordered region.

The protein belongs to the bacterial ribosomal protein bL32 family.

In Synechococcus sp. (strain ATCC 27144 / PCC 6301 / SAUG 1402/1) (Anacystis nidulans), this protein is Large ribosomal subunit protein bL32.